The primary structure comprises 578 residues: Phosphoenolpyruvate-protein phosphotransferase (578 aa).

H195 (tele-phosphohistidine intermediate) is an active-site residue. Residues R302 and R338 each coordinate phosphoenolpyruvate. Positions 437 and 461 each coordinate Mg(2+). Phosphoenolpyruvate is bound by residues 460–461 (ND) and R471. The Proton donor role is filled by C508.

This sequence belongs to the PEP-utilizing enzyme family. As to quaternary structure, homodimer. The cofactor is Mg(2+).

The protein resides in the cytoplasm. The catalysed reaction is L-histidyl-[protein] + phosphoenolpyruvate = N(pros)-phospho-L-histidyl-[protein] + pyruvate. Its function is as follows. General (non sugar-specific) component of the phosphoenolpyruvate-dependent sugar phosphotransferase system (sugar PTS). This major carbohydrate active-transport system catalyzes the phosphorylation of incoming sugar substrates concomitantly with their translocation across the cell membrane. Enzyme I transfers the phosphoryl group from phosphoenolpyruvate (PEP) to the phosphoryl carrier protein (HPr). The sequence is that of Phosphoenolpyruvate-protein phosphotransferase (ptsI) from Geobacillus stearothermophilus (Bacillus stearothermophilus).